The sequence spans 222 residues: Sugar fermentation stimulation protein homolog (222 aa).

This sequence belongs to the SfsA family.

This chain is Sugar fermentation stimulation protein homolog, found in Thermotoga petrophila (strain ATCC BAA-488 / DSM 13995 / JCM 10881 / RKU-1).